The primary structure comprises 62 residues: Statherin (62 aa).

A signal peptide spans 1–19 (MKFLVFAFILALMVSMIGA). Residues 20 to 25 (DSSEEK) form a hydroxyapatite-binding; inhibits crystal growth region. Phosphoserine occurs at positions 21 and 22. The isoglutamyl lysine isopeptide (Lys-Gln); in form cyclo-statherin Q-37 cross-link spans 25–56 (KFLRRIGRFGYGYGPYQPVPEQPLYPQPYQPQ). The isoglutamyl lysine isopeptide (Lys-Gln); in form cyclo-statherin Q-39 cross-link spans 25 to 58 (KFLRRIGRFGYGYGPYQPVPEQPLYPQPYQPQYQ). Residues 38 to 62 (GPYQPVPEQPLYPQPYQPQYQQYTF) form a hydrophobic; inhibits precipitation of calcium phosphate salts region.

The protein belongs to the histatin/statherin family. Substrate for transglutaminase-2. More than 95% of the cyclized peptide is cyclo-statherin Q-37, and less than 5% is cyclo-statherin Q-39. Cyclized forms account for about 1% of total statherin in saliva. Post-translationally, sulfated on tyrosine residues. In terms of tissue distribution, secreted by parotid and submandibular glands.

The protein localises to the secreted. In terms of biological role, salivary protein that stabilizes saliva supersaturated with calcium salts by inhibiting the precipitation of calcium phosphate salts. It also modulates hydroxyapatite crystal formation on the tooth surface. This is Statherin (STATH) from Homo sapiens (Human).